The chain runs to 516 residues: Homeobox protein 6 (516 aa).

Low complexity predominate over residues 22-31; sequence NYDFDNKNNS. Disordered stretches follow at residues 22–140, 200–256, and 268–348; these read NYDF…PNCN, SLNN…SSPS, and DEND…NNGD. Residues 32 to 41 show a composition bias toward gly residues; the sequence is IGGGGGGGGS. Low complexity-rich tracts occupy residues 42 to 59, 66 to 78, and 101 to 132; these read SSSR…SSSG, SNSS…IINS, and TTTT…NSSS. The span at 284 to 346 shows a compositional bias: low complexity; that stretch reads NNNNNNNNNN…NNNNTNTNNN (63 aa). 2 consecutive DNA-binding regions (homeobox) follow at residues 362 to 421 and 424 to 483; these read KSGQ…SKSG and SYAK…NKLS. The interval 483 to 516 is disordered; it reads SSKAIQDKDNQDNDNNNSNNNENNDDSYSDEGLF. Over residues 495-504 the composition is skewed to low complexity; sequence NDNNNSNNNE. Residues 505-516 are compositionally biased toward acidic residues; that stretch reads NNDDSYSDEGLF.

The protein resides in the nucleus. Putative transcription factor. The chain is Homeobox protein 6 (hbx6) from Dictyostelium discoideum (Social amoeba).